The chain runs to 379 residues: Cytochrome b (379 aa).

Transmembrane regions (helical) follow at residues 34–54 (FGSL…LLAM), 78–99 (WLIR…YLHI), 114–134 (WNTG…GYVL), and 179–199 (FFAL…IHLT). The heme b site is built by His-84 and His-98. 2 residues coordinate heme b: His-183 and His-197. Residue His-202 coordinates a ubiquinone. 4 consecutive transmembrane segments (helical) span residues 227 to 247 (LKDI…AFFS), 289 to 309 (LGGV…PFLH), 321 to 341 (LSQM…WIGS), and 348 to 368 (FIII…ILFP).

The protein belongs to the cytochrome b family. In terms of assembly, the cytochrome bc1 complex contains 11 subunits: 3 respiratory subunits (MT-CYB, CYC1 and UQCRFS1), 2 core proteins (UQCRC1 and UQCRC2) and 6 low-molecular weight proteins (UQCRH/QCR6, UQCRB/QCR7, UQCRQ/QCR8, UQCR10/QCR9, UQCR11/QCR10 and a cleavage product of UQCRFS1). This cytochrome bc1 complex then forms a dimer. It depends on heme b as a cofactor.

The protein resides in the mitochondrion inner membrane. In terms of biological role, component of the ubiquinol-cytochrome c reductase complex (complex III or cytochrome b-c1 complex) that is part of the mitochondrial respiratory chain. The b-c1 complex mediates electron transfer from ubiquinol to cytochrome c. Contributes to the generation of a proton gradient across the mitochondrial membrane that is then used for ATP synthesis. This Dromaius novaehollandiae (Emu) protein is Cytochrome b (MT-CYB).